The sequence spans 329 residues: uncharacterized protein (329 aa).

Residues 1–20 (MGESTTQPAGGAAVDDETRS) are disordered.

This is an uncharacterized protein from Mycobacterium tuberculosis (strain CDC 1551 / Oshkosh).